The sequence spans 662 residues: Histidine decarboxylase (662 aa).

Residues Y81 and H194 each coordinate substrate. Position 305 is an N6-(pyridoxal phosphate)lysine (K305).

This sequence belongs to the group II decarboxylase family. As to quaternary structure, homodimer. Pyridoxal 5'-phosphate serves as cofactor.

The enzyme catalyses L-histidine + H(+) = histamine + CO2. Its pathway is amine and polyamine biosynthesis; histamine biosynthesis; histamine from L-histidine: step 1/1. In terms of biological role, catalyzes the biosynthesis of histamine from histidine. This is Histidine decarboxylase (HDC) from Homo sapiens (Human).